A 745-amino-acid chain; its full sequence is Aminopeptidase NAALADL1 (745 aa).

The Cytoplasmic portion of the chain corresponds to 1–6 (MHWAKI). Residues 7–28 (LGVGIGAAALLGLGIILGHFAI) form a helical; Signal-anchor for type II membrane protein membrane-spanning segment. The Extracellular segment spans residues 29 to 745 (PKATEPLASS…AATLQPVTDL (717 aa)). Asparagine 128, asparagine 141, and asparagine 235 each carry an N-linked (GlcNAc...) asparagine glycan. Ca(2+) is bound by residues threonine 263 and leucine 266. Asparagine 279, asparagine 304, and asparagine 350 each carry an N-linked (GlcNAc...) asparagine glycan. Cysteines 301 and 318 form a disulfide. Residues histidine 373 and aspartate 383 each contribute to the Zn(2+) site. Glutamate 421 functions as the Proton donor/acceptor in the catalytic mechanism. Zn(2+) is bound at residue glutamate 422. Ca(2+)-binding residues include glutamate 430 and glutamate 433. Aspartate 450 is a Zn(2+) binding site. Residues asparagine 456 and asparagine 497 are each glycosylated (N-linked (GlcNAc...) asparagine). Histidine 550 provides a ligand contact to Zn(2+). 2 N-linked (GlcNAc...) asparagine glycosylation sites follow: asparagine 593 and asparagine 620.

This sequence belongs to the peptidase M28 family. M28B subfamily. In terms of assembly, homodimer. Zn(2+) is required as a cofactor. N-glycosylated. Detected on apical villi on the brush border membrane of ileum enterocytes (at protein level). Mainly expressed in the distal small intestine.

Its subcellular location is the apical cell membrane. Functionally, aminopeptidase with broad substrate specificity. Has lower activity with substrates that have Asp or Glu in the P2' position, or Pro in the P3' position. Lacks activity with substrates that have both Pro in the P3' position and Asp or Glu in the P2' position. Lacks carboxypeptidase activity. Lacks dipeptidyl-peptidase IV type activity. This chain is Aminopeptidase NAALADL1 (Naaladl1), found in Rattus norvegicus (Rat).